The chain runs to 59 residues: Large ribosomal subunit protein bL32 (59 aa).

Positions Met1 to Glu59 are disordered. Positions Arg49–Glu59 are enriched in basic residues.

Belongs to the bacterial ribosomal protein bL32 family.

The sequence is that of Large ribosomal subunit protein bL32 from Laribacter hongkongensis (strain HLHK9).